Consider the following 205-residue polypeptide: Nascent polypeptide-associated complex subunit alpha-like protein (205 aa).

2 disordered regions span residues 1–73 (MPSV…RKAM) and 137–166 (KAPN…DTGV). Basic and acidic residues predominate over residues 20–29 (EQQELEHSDE). A compositionally biased stretch (acidic residues) spans 30–51 (PILEDDEDDDDEEDDNDEDDAQ). A compositionally biased stretch (basic and acidic residues) spans 56–66 (GEGKSKQSRSE). The 66-residue stretch at 63–128 (SRSEKKCRKA…AKIEDLSSQL (66 aa)) folds into the NAC-A/B domain. Residues 155-165 (QEDEDEVDDTG) are compositionally biased toward acidic residues. Positions 166 to 203 (VEPKDIELVMTQAGVSRTKAVKALKAADGDIVSAIMDL) constitute a UBA domain.

Belongs to the NAC-alpha family.

May promote appropriate targeting of ribosome-nascent polypeptide complexes. This is Nascent polypeptide-associated complex subunit alpha-like protein from Pinus taeda (Loblolly pine).